The following is a 544-amino-acid chain: Membrane protein insertase YidC (544 aa).

A helical transmembrane segment spans residues 6–26 (NILLIGLLFVSFLLWQQWQAD). Positions 34 to 58 (AAQTQSSIPASTVADSHSSDVPDAD) are disordered. A compositionally biased stretch (polar residues) spans 39–49 (SSIPASTVADS). 4 consecutive transmembrane segments (helical) span residues 345–365 (LLMF…LITL), 423–443 (GGCL…WVLL), 460–480 (LSVQ…MFVM), and 503–523 (VIFT…WLVG).

It belongs to the OXA1/ALB3/YidC family. Type 1 subfamily. In terms of assembly, interacts with the Sec translocase complex via SecD. Specifically interacts with transmembrane segments of nascent integral membrane proteins during membrane integration.

It localises to the cell inner membrane. Its function is as follows. Required for the insertion and/or proper folding and/or complex formation of integral membrane proteins into the membrane. Involved in integration of membrane proteins that insert both dependently and independently of the Sec translocase complex, as well as at least some lipoproteins. Aids folding of multispanning membrane proteins. In Shewanella halifaxensis (strain HAW-EB4), this protein is Membrane protein insertase YidC.